Reading from the N-terminus, the 739-residue chain is Catalase-peroxidase 2 (739 aa).

An N-terminal signal peptide occupies residues 1-26 (MKKTTIPTLSALTLAMSLAFGGAAIA). A cross-link (tryptophyl-tyrosyl-methioninium (Trp-Tyr) (with M-253)) is located at residues 105–227 (WHSAGVYRIF…MGATQMGLIY (123 aa)). H106 functions as the Proton acceptor in the catalytic mechanism. A cross-link (tryptophyl-tyrosyl-methioninium (Tyr-Met) (with W-105)) is located at residues 227–253 (YVNPEGPNGVPDPLASAKEIRDTFGRM). H268 is a heme b binding site.

Belongs to the peroxidase family. Peroxidase/catalase subfamily. As to quaternary structure, homodimer or homotetramer. It depends on heme b as a cofactor. In terms of processing, formation of the three residue Trp-Tyr-Met cross-link is important for the catalase, but not the peroxidase activity of the enzyme.

It catalyses the reaction H2O2 + AH2 = A + 2 H2O. The catalysed reaction is 2 H2O2 = O2 + 2 H2O. Functionally, bifunctional enzyme with both catalase and broad-spectrum peroxidase activity. The chain is Catalase-peroxidase 2 from Shewanella sp. (strain MR-4).